Consider the following 635-residue polypeptide: Dihydrolipoyllysine-residue acetyltransferase component of pyruvate dehydrogenase complex, mitochondrial (635 aa).

In terms of domain architecture, Lipoyl-binding 1 spans 83–160; the sequence is GKEITMPALS…EINKPIAIIV (78 aa). Lys-124 bears the N6-lipoyllysine mark. The segment at 171–204 is disordered; it reads KNYKPSSQASSTPVQEEAPKPKQEAPKKSTKTYP. Over residues 174–184 the composition is skewed to polar residues; that stretch reads KPSSQASSTPV. Residues 187-197 show a composition bias toward basic and acidic residues; it reads EAPKPKQEAPK. One can recognise a Lipoyl-binding 2 domain in the interval 206–283; that stretch reads HKVVGMPALS…QINQPVCIIV (78 aa). Lys-247 carries the N6-lipoyllysine modification. A disordered region spans residues 295–338; sequence YSVEEQSSSSSSSSQESTPSSSSSSSQESTPSQSSSQQTTRKSG. Low complexity predominate over residues 298–334; sequence EEQSSSSSSSSQESTPSSSSSSSQESTPSQSSSQQTT. Residues 342–379 enclose the Peripheral subunit-binding (PSBD) domain; that stretch reads FATPAARFEASSKGYDLSAINGTGPNNRILKADVLEFV. Residues 382–413 are disordered; it reads KQEVAQQQQQQTTTTTKKPTTPTSSGEFTDIP. Positions 387-404 are enriched in low complexity; it reads QQQQQQTTTTTKKPTTPT. The segment at 403–635 is catalytic; the sequence is PTSSGEFTDI…YVENPIKLIL (233 aa).

It belongs to the 2-oxoacid dehydrogenase family. As to quaternary structure, 20 to 30 alpha(2)-beta(2) tetramers of E1 + 6 homodimers of E3 + 60 copies of E2. Requires (R)-lipoate as cofactor.

It is found in the mitochondrion matrix. It carries out the reaction N(6)-[(R)-dihydrolipoyl]-L-lysyl-[protein] + acetyl-CoA = N(6)-[(R)-S(8)-acetyldihydrolipoyl]-L-lysyl-[protein] + CoA. Functionally, the pyruvate dehydrogenase complex catalyzes the overall conversion of pyruvate to acetyl-CoA and CO(2). It contains multiple copies of three enzymatic components: pyruvate dehydrogenase (E1), dihydrolipoamide acetyltransferase (E2) and lipoamide dehydrogenase (E3). The sequence is that of Dihydrolipoyllysine-residue acetyltransferase component of pyruvate dehydrogenase complex, mitochondrial (pdhC) from Dictyostelium discoideum (Social amoeba).